A 774-amino-acid polypeptide reads, in one-letter code: MSLLLTIAKEYKRLCQDAKAAQMMTVGTVSNYTTFKKWTTSRKEKNPSLRMRWAMSSKFPIIANKRMLEEAQIPKEHNNVALWEDTEDVSKRDHVLASTSCINYWNFCGPCANNSEVIKEVYKSRFGRLERRKEIMWKELRFTLVDRQRRRVDTQPVEQRLRTGEIKDLQMWTLFEDEAPLASKFILDNYGLVKEMRSKFANKPLNKEVVAHMLEKQFNPESRFLPVFGAIRPERMELIHALGGETWIQEANTAGISNVDQRKNDMRAVCRKVCLAANASIMNAKSKLVEYIKSTSMRIGETERKLEELILETDDVSPEVTLCKSALGGPLGKTLSFGPMLLKKISGSGVKVKDTVYIQGVRAVQFEYWSEQEEFYGEYKSATALFSRKERSLEWITIGGGINEDRKRLLAMCMIFCRDGDYFKDAPATITMADLSTKLGREIPYQYVMMNWIQKSEDNLEALLYSRGIVETNPGKMGSSMGIDGSKRAIKSLRAVTIQSGKIDMPESKEKIHLELSDNLEAFDSSGRIVATILDLPSDKKVTFQDVSFQHPDLAVLRDEKTAITKGYEALIKRLGTGDNDIPSLIAKKDYLSLYNLPEVKLMAPLIRPNRKGVYSRVARKLVSTQVTTGHYSLHELIKVLPFTYFAPKQGMFEGRLFFSNDSFVEPGVNNNVFSWSKADSSKIYCHGIAIRVPLVVGDEHMDTSLALLEGFSVCENDPRAPMVTRQDLIDVGFGQKVRLFIGQGSVRTFKRTASQRAASSDVNKNVKKIKMSN.

Belongs to the influenza viruses PB2 family. In terms of assembly, influenza RNA polymerase is composed of three subunits: PB1, PB2 and PA. Interacts (via N-terminus) with PB1 (via C-terminus). Interacts with nucleoprotein NP (via N-terminus).

Its subcellular location is the virion. The protein localises to the host nucleus. Functionally, plays an essential role in transcription initiation and cap-stealing mechanism, in which cellular capped pre-mRNAs are used to generate primers for viral transcription. Recognizes and binds a wide range of cap structures of target pre-RNAs which are subsequently cleaved after 10-13 nucleotides by the viral protein PA. Plays a role in the initiation of the viral genome replication and modulates the activity of the ribonucleoprotein (RNP) complex. The polypeptide is Polymerase basic protein 2 (Homo sapiens (Human)).